We begin with the raw amino-acid sequence, 660 residues long: Sodium/nucleoside cotransporter 2 (660 aa).

Residue Ser46 is modified to Phosphoserine. 14 helical membrane-spanning segments follow: residues 82 to 102 (ILLGLLCLAYAAYFLAACILN), 106 to 125 (ALALFVITCLVIFILACHFL), 150 to 168 (KRVFVGLSVVGLILWLALD), 174 to 194 (EQLISFAGICMFILILFACSK), 202 to 222 (RTVFWGLGLQFIFGILVIRTE), 235 to 255 (IQIFLAYTVEGSSFVFGDTLV), 262 to 282 (QSLPIIIFFGCVMSILYYLGL), 297 to 316 (TMGTTAAETLAVAGNIFVGM), 338 to 357 (VMTGGFATIAGTVLGAFISF), 364 to 383 (LISASVMAAPCALALSKLVY), 425 to 445 (VAANLIAFLAVLAFINATLSW), 456 to 476 (SFQVICSYVLRPMVFMMGVQW), 531 to 551 (TTFSLCGFANLSSIGITLGGL), and 569 to 589 (ALFTGACVSFISACMAGILYV).

Belongs to the concentrative nucleoside transporter (CNT) (TC 2.A.41) family.

It is found in the membrane. Its subcellular location is the apicolateral cell membrane. It carries out the reaction adenosine(out) + Na(+)(out) = adenosine(in) + Na(+)(in). The catalysed reaction is inosine(out) + Na(+)(out) = inosine(in) + Na(+)(in). It catalyses the reaction guanosine(out) + Na(+)(out) = guanosine(in) + Na(+)(in). The enzyme catalyses uridine(out) + Na(+)(out) = uridine(in) + Na(+)(in). In terms of biological role, sodium-dependent and purine-selective transporter. Exhibits the transport characteristics of the nucleoside transport system cif or N1 subtype (N1/cif) (selective for purine nucleosides and uridine). Plays a critical role in specific uptake and salvage of purine nucleosides in kidney and other tissues. May contribute to regulate the transport of organic compounds in testes across the blood-testis-barrier. This chain is Sodium/nucleoside cotransporter 2 (Slc28a2), found in Mus musculus (Mouse).